A 264-amino-acid polypeptide reads, in one-letter code: Thiazole synthase (264 aa).

Residue Lys106 is the Schiff-base intermediate with DXP of the active site. Residues Gly167, 193–194 (AG), and 215–216 (NS) each bind 1-deoxy-D-xylulose 5-phosphate.

The protein belongs to the ThiG family. Homotetramer. Forms heterodimers with either ThiH or ThiS.

Its subcellular location is the cytoplasm. It carries out the reaction [ThiS sulfur-carrier protein]-C-terminal-Gly-aminoethanethioate + 2-iminoacetate + 1-deoxy-D-xylulose 5-phosphate = [ThiS sulfur-carrier protein]-C-terminal Gly-Gly + 2-[(2R,5Z)-2-carboxy-4-methylthiazol-5(2H)-ylidene]ethyl phosphate + 2 H2O + H(+). It functions in the pathway cofactor biosynthesis; thiamine diphosphate biosynthesis. In terms of biological role, catalyzes the rearrangement of 1-deoxy-D-xylulose 5-phosphate (DXP) to produce the thiazole phosphate moiety of thiamine. Sulfur is provided by the thiocarboxylate moiety of the carrier protein ThiS. In vitro, sulfur can be provided by H(2)S. The chain is Thiazole synthase from Pseudomonas savastanoi pv. phaseolicola (strain 1448A / Race 6) (Pseudomonas syringae pv. phaseolicola (strain 1448A / Race 6)).